Consider the following 130-residue polypeptide: Small ribosomal subunit protein uS8 (130 aa).

It belongs to the universal ribosomal protein uS8 family. As to quaternary structure, part of the 30S ribosomal subunit. Contacts proteins S5 and S12.

In terms of biological role, one of the primary rRNA binding proteins, it binds directly to 16S rRNA central domain where it helps coordinate assembly of the platform of the 30S subunit. This Stutzerimonas stutzeri (strain A1501) (Pseudomonas stutzeri) protein is Small ribosomal subunit protein uS8.